Consider the following 199-residue polypeptide: Adenylyl-sulfate kinase (199 aa).

34 to 41 (GLSGSGKS) is an ATP binding site. Ser108 (phosphoserine intermediate) is an active-site residue.

The protein belongs to the APS kinase family.

The enzyme catalyses adenosine 5'-phosphosulfate + ATP = 3'-phosphoadenylyl sulfate + ADP + H(+). It participates in sulfur metabolism; hydrogen sulfide biosynthesis; sulfite from sulfate: step 2/3. Catalyzes the synthesis of activated sulfate. The chain is Adenylyl-sulfate kinase from Oceanobacillus iheyensis (strain DSM 14371 / CIP 107618 / JCM 11309 / KCTC 3954 / HTE831).